A 331-amino-acid polypeptide reads, in one-letter code: D-alanine--D-alanine ligase (331 aa).

The region spanning 116–316 (KRLWQTHSLP…YEDFVLQLAA (201 aa)) is the ATP-grasp domain. Residue 142 to 197 (ADRLGLPLIVKPAREGSSIGLTKVTSVAELPAAYEKAARLDRDVMAEQFIDGDELT) participates in ATP binding. Asp269, Glu283, and Asn285 together coordinate Mg(2+).

The protein belongs to the D-alanine--D-alanine ligase family. Requires Mg(2+) as cofactor. Mn(2+) serves as cofactor.

The protein localises to the cytoplasm. The catalysed reaction is 2 D-alanine + ATP = D-alanyl-D-alanine + ADP + phosphate + H(+). It participates in cell wall biogenesis; peptidoglycan biosynthesis. Cell wall formation. This is D-alanine--D-alanine ligase from Ralstonia nicotianae (strain ATCC BAA-1114 / GMI1000) (Ralstonia solanacearum).